Consider the following 873-residue polypeptide: Alanine--tRNA ligase (873 aa).

The Zn(2+) site is built by histidine 562, histidine 566, cysteine 663, and histidine 667.

The protein belongs to the class-II aminoacyl-tRNA synthetase family. It depends on Zn(2+) as a cofactor.

The protein resides in the cytoplasm. The enzyme catalyses tRNA(Ala) + L-alanine + ATP = L-alanyl-tRNA(Ala) + AMP + diphosphate. In terms of biological role, catalyzes the attachment of alanine to tRNA(Ala) in a two-step reaction: alanine is first activated by ATP to form Ala-AMP and then transferred to the acceptor end of tRNA(Ala). Also edits incorrectly charged Ser-tRNA(Ala) and Gly-tRNA(Ala) via its editing domain. This chain is Alanine--tRNA ligase, found in Bordetella avium (strain 197N).